Here is a 191-residue protein sequence, read N- to C-terminus: Penicillin-binding protein activator LpoB (191 aa).

The signal sequence occupies residues 1–16; it reads MKRYLSLALAALVLTG. Cys-17 carries the N-palmitoyl cysteine lipid modification. Cys-17 carries the S-diacylglycerol cysteine lipid modification.

It belongs to the LpoB family. In terms of assembly, interacts with PBP1b.

The protein localises to the cell outer membrane. Its function is as follows. Regulator of peptidoglycan synthesis that is essential for the function of penicillin-binding protein 1B (PBP1b). The sequence is that of Penicillin-binding protein activator LpoB from Yersinia pestis (strain D182038).